Reading from the N-terminus, the 200-residue chain is 3-isopropylmalate dehydratase small subunit (200 aa).

It belongs to the LeuD family. LeuD type 1 subfamily. In terms of assembly, heterodimer of LeuC and LeuD.

The enzyme catalyses (2R,3S)-3-isopropylmalate = (2S)-2-isopropylmalate. It functions in the pathway amino-acid biosynthesis; L-leucine biosynthesis; L-leucine from 3-methyl-2-oxobutanoate: step 2/4. Functionally, catalyzes the isomerization between 2-isopropylmalate and 3-isopropylmalate, via the formation of 2-isopropylmaleate. The polypeptide is 3-isopropylmalate dehydratase small subunit (Campylobacter jejuni subsp. jejuni serotype O:23/36 (strain 81-176)).